Consider the following 82-residue polypeptide: Small ribosomal subunit protein uS12 (82 aa).

Aspartate 59 is modified (3-methylthioaspartic acid).

Belongs to the universal ribosomal protein uS12 family. In terms of assembly, part of the 30S ribosomal subunit. Contacts proteins S8 and S17. May interact with IF1 in the 30S initiation complex.

In terms of biological role, with S4 and S5 plays an important role in translational accuracy. Functionally, interacts with and stabilizes bases of the 16S rRNA that are involved in tRNA selection in the A site and with the mRNA backbone. Located at the interface of the 30S and 50S subunits, it traverses the body of the 30S subunit contacting proteins on the other side and probably holding the rRNA structure together. The combined cluster of proteins S8, S12 and S17 appears to hold together the shoulder and platform of the 30S subunit. The chain is Small ribosomal subunit protein uS12 (rpsL) from Actinobacillus pleuropneumoniae (Haemophilus pleuropneumoniae).